We begin with the raw amino-acid sequence, 498 residues long: ATP synthase subunit beta, chloroplastic (498 aa).

Residue 172 to 179 (GGAGVGKT) participates in ATP binding.

The protein belongs to the ATPase alpha/beta chains family. In terms of assembly, F-type ATPases have 2 components, CF(1) - the catalytic core - and CF(0) - the membrane proton channel. CF(1) has five subunits: alpha(3), beta(3), gamma(1), delta(1), epsilon(1). CF(0) has four main subunits: a(1), b(1), b'(1) and c(9-12).

It is found in the plastid. The protein localises to the chloroplast thylakoid membrane. The enzyme catalyses ATP + H2O + 4 H(+)(in) = ADP + phosphate + 5 H(+)(out). Its function is as follows. Produces ATP from ADP in the presence of a proton gradient across the membrane. The catalytic sites are hosted primarily by the beta subunits. The chain is ATP synthase subunit beta, chloroplastic from Citrus sinensis (Sweet orange).